Here is a 995-residue protein sequence, read N- to C-terminus: DNA repair protein Rev1 (995 aa).

A BRCT domain is found at 35–121 (RKSDLFQGIS…KIVDYKPYLL (87 aa)). 2 disordered regions span residues 135–164 (GKPK…DSTK) and 182–211 (VATS…TTAR). Positions 136–164 (KPKDNGANESKSDVEPPKDKAEVEVDSTK) are enriched in basic and acidic residues. Residues 192–211 (ASESKITNLSTTSNNSTTAR) show a composition bias toward low complexity. The UmuC domain occupies 275-505 (VMHIDMDCFF…MSLDLLPGVG (231 aa)). Asp279 is a Mg(2+) binding site. DCTP-binding positions include 361-367 (SCSYEAR), Asn373, and Asp421. Residue Asp421 coordinates Mg(2+). Glu422 is an active-site residue. The interaction with PolI stretch occupies residues 696–868 (SEMRKDKPIP…HYIRSDQIVA (173 aa)). The segment at 878–995 (VNPHILKLIS…IEYIRCIKCS (118 aa)) is interaction with PolH/DNApol-eta.

This sequence belongs to the DNA polymerase type-Y family. In terms of assembly, interacts (via C-terminus) with PolH/DNApol-eta (via C-terminal regions). Interacts (via C-terminus) with PolI. Mg(2+) is required as a cofactor.

It is found in the nucleus. Its function is as follows. Deoxycytidyl transferase involved in DNA repair. Transfers a dCMP residue from dCTP to the 3'-end of a DNA primer in a template-dependent reaction. May assist in the first step in the bypass of abasic lesions by the insertion of a nucleotide opposite the lesion. Required for normal induction of mutations by physical and chemical agents. During homologous recombination (HR) repair of DNA double-strand breaks (DSBs) regulates the extent of repair synthesis. Possibly recruits the DNA polymerase zeta complex or another translesion polymerase to early DSB repair intermediates to initiate repair synthesis, while also blocking the access of more processive polymerases preventing them from acting during the initial stages of HR repair. The chain is DNA repair protein Rev1 from Drosophila melanogaster (Fruit fly).